We begin with the raw amino-acid sequence, 377 residues long: Gap junction gamma-1 protein (377 aa).

The Cytoplasmic portion of the chain corresponds to M1–T18. A helical transmembrane segment spans residues F19 to G39. Topologically, residues G40–R75 are extracellular. The chain crosses the membrane as a helical span at residues F76–M96. Residues H97–K174 are Cytoplasmic-facing. Positions D129–G163 are disordered. Over residues E131–K151 the composition is skewed to acidic residues. A helical transmembrane segment spans residues V175–L197. The Extracellular segment spans residues Y198 to T228. A helical transmembrane segment spans residues I229 to L249. Residues F250–L377 lie on the Cytoplasmic side of the membrane. Disordered regions lie at residues K266–L286 and A341–L377. Residues S344–N362 show a composition bias toward polar residues.

It belongs to the connexin family. Gamma-type subfamily. As to quaternary structure, a connexon is composed of a hexamer of connexins.

It localises to the cell membrane. The protein resides in the cell junction. The protein localises to the gap junction. One gap junction consists of a cluster of closely packed pairs of transmembrane channels, the connexons, through which materials of low MW diffuse from one cell to a neighboring cell. The protein is Gap junction gamma-1 protein (gjc1) of Xenopus laevis (African clawed frog).